The sequence spans 574 residues: Glutamyl-tRNA(Gln) amidotransferase subunit B, mitochondrial (574 aa).

The N-terminal 12 residues, 1-12 (MIRQFVSHRGIP), are a transit peptide targeting the mitochondrion. Residues 34 to 62 (PLGRKNWSTSDEAKSKRAAMRKGGAPPPE) form a disordered region.

Belongs to the GatB/GatE family. GatB subfamily. In terms of assembly, subunit of the heterotrimeric GatCAB amidotransferase (AdT) complex, composed of A, B and C subunits.

The protein resides in the mitochondrion. It carries out the reaction L-glutamyl-tRNA(Gln) + L-glutamine + ATP + H2O = L-glutaminyl-tRNA(Gln) + L-glutamate + ADP + phosphate + H(+). Allows the formation of correctly charged Gln-tRNA(Gln) through the transamidation of misacylated Glu-tRNA(Gln) in the mitochondria. The reaction takes place in the presence of glutamine and ATP through an activated gamma-phospho-Glu-tRNA(Gln). The protein is Glutamyl-tRNA(Gln) amidotransferase subunit B, mitochondrial of Ajellomyces capsulatus (strain H143) (Darling's disease fungus).